The primary structure comprises 378 residues: Probable dihydroorotase-like protein (378 aa).

Belongs to the metallo-dependent hydrolases superfamily. DHOase family. PyrC' subfamily.

In terms of biological role, non-functional DHOase. The polypeptide is Probable dihydroorotase-like protein (pyrC') (Helicobacter pylori (strain J99 / ATCC 700824) (Campylobacter pylori J99)).